The primary structure comprises 659 residues: Polyamine transporter 4 (659 aa).

Composition is skewed to polar residues over residues 1 to 20 (MPSS…NIQQ) and 28 to 45 (NVTN…TGSI). Residues 1–81 (MPSSLTKTES…LDWDGPDDPD (81 aa)) form a disordered region. Topologically, residues 1-99 (MPSSLTKTES…KKWYTTMTSA (99 aa)) are cytoplasmic. The helical transmembrane segment at 100–120 (FLCLVVTMGSSLYVSSVPELV) threads the bilayer. Topologically, residues 121–128 (ERYHVSQT) are extracellular. A helical transmembrane segment spans residues 129–149 (LALAGLTFYLLGLSTVIGAPL). Over 150-157 (SEVFGRKP) the chain is Cytoplasmic. The helical transmembrane segment at 158–178 (VYLFSLPVSMLFTMGVGLSNG) threads the bilayer. Residues 179 to 187 (HMRIILPLR) are Extracellular-facing. The chain crosses the membrane as a helical span at residues 188 to 208 (FLSGVFASPALSVGSGTILDI). The Cytoplasmic segment spans residues 209-215 (FDVDQVS). Residues 216-236 (VAMTYFVLSPFLGPVLSPIMA) traverse the membrane as a helical segment. The Extracellular segment spans residues 237–246 (GFATEAKGWR). Residues 247–267 (WSEWIQLIAGGLILPFIALMP) form a helical membrane-spanning segment. The Cytoplasmic portion of the chain corresponds to 268 to 316 (ETHKGIILRKRAKKRNIALKKFSREAQKEFLKTTVTITILRPLKMLVVE). The helical transmembrane segment at 317–337 (PIVFVFSVYVAFIFAILFGFF) threads the bilayer. Residues 338–355 (EAYAVIYRGVYHMSMGIS) lie on the Extracellular side of the membrane. Residues 356 to 376 (GLPFIGIGVGLWIGAFFYLYI) form a helical membrane-spanning segment. The Cytoplasmic portion of the chain corresponds to 377–423 (DRKYLFPKPPAGTQPLTEKERTSKRTTPYRGARDAETGELLPVVPEK). The tract at residues 387–408 (AGTQPLTEKERTSKRTTPYRGA) is disordered. Residues 424–444 (FLIACKFGSVALPIGLFWQAW) form a helical membrane-spanning segment. Topologically, residues 445–456 (TARSDVHWMAPV) are extracellular. The helical transmembrane segment at 457 to 477 (AAGVPFGFGLILIFFSVLMYF) threads the bilayer. Over 478–486 (STCYPPLTV) the chain is Cytoplasmic. A helical transmembrane segment spans residues 487–509 (ASCLAANNLLRYVMSSVFPLFTI). Topologically, residues 510-518 (QMYTKMKIK) are extracellular. A helical membrane pass occupies residues 519-539 (WASTLFALVCVVMIPIPWVFE). The Cytoplasmic portion of the chain corresponds to 540–659 (KWGSKLRHKS…MATDASARMV (120 aa)). Basic and acidic residues predominate over residues 587–602 (METDPSTREKPGERLS). The tract at residues 587–631 (METDPSTREKPGERLSLRRTHTQPVPASFDREDGQHAQNRNEPIS) is disordered. A phosphothreonine mark is found at threonine 589, threonine 606, and threonine 608. Residues 622-631 (HAQNRNEPIS) are compositionally biased toward polar residues. 2 positions are modified to phosphoserine: serine 633 and serine 646.

The protein belongs to the major facilitator superfamily. DHA1 family. Polyamines/proton antiporter (TC 2.A.1.2.16) subfamily.

The protein localises to the cell membrane. Cell membrane polyamine/proton antiporter, involved in the detoxification of excess polyamines in the cytoplasm. Recognizes spermidine, spermine and the antimalarial drug quinidine, but not quinine, chloroquine and mefloquine. This Saccharomyces cerevisiae (strain ATCC 204508 / S288c) (Baker's yeast) protein is Polyamine transporter 4 (TPO4).